The chain runs to 188 residues: Thymidine kinase (188 aa).

ATP is bound at residue G17–T24. The Proton acceptor role is filled by E92. Position 121 (F121) interacts with substrate. Zn(2+) contacts are provided by C146 and C149. L166–G170 serves as a coordination point for substrate. Residues C179 and C182 each coordinate Zn(2+).

Belongs to the thymidine kinase family.

The catalysed reaction is thymidine + ATP = dTMP + ADP + H(+). Functionally, phosphorylates thymidine. ASFV replicates in the cytoplasm of infected cells and contains genes encoding a number of enzymes needed for DNA synthesis, including thymidine kinase. Important for growth in swine macrophages in vitro and is a virus virulence factor in swine. In African swine fever virus (isolate Tick/South Africa/Pretoriuskop Pr4/1996) (ASFV), this protein is Thymidine kinase.